Reading from the N-terminus, the 318-residue chain is Ubiquitin-like domain-containing CTD phosphatase 1 (318 aa).

Residue alanine 2 is modified to N-acetylalanine. The Ubiquitin-like domain maps to 3–81; sequence LPIIVKWGGQ…IMMMGTREES (79 aa). Position 117 is an N6-acetyllysine (lysine 117). In terms of domain architecture, FCP1 homology spans 133-294; that stretch reads PREGKKLLVL…LKLTQYLKEI (162 aa). The Mg(2+) site is built by aspartate 143, aspartate 145, and aspartate 253.

It depends on Mg(2+) as a cofactor.

It localises to the nucleus. It catalyses the reaction O-phospho-L-seryl-[protein] + H2O = L-seryl-[protein] + phosphate. It carries out the reaction O-phospho-L-threonyl-[protein] + H2O = L-threonyl-[protein] + phosphate. In terms of biological role, dephosphorylates 26S nuclear proteasomes, thereby decreasing their proteolytic activity. Recruited to the 19S regulatory particle of the 26S proteasome through its interaction with 19S component PSMD2/RPN1. Once recruited, dephosphorylates 19S component PSMC2/RPT1 which impairs PSMC2 ATPase activity and disrupts 26S proteasome assembly. Has also been reported to stimulate the proteolytic activity of the 26S proteasome. In Pongo abelii (Sumatran orangutan), this protein is Ubiquitin-like domain-containing CTD phosphatase 1 (UBLCP1).